The sequence spans 1151 residues: Chromosome partition protein Smc (1151 aa).

Residue 32–39 coordinates ATP; it reads PNGCGKSN. Coiled coils occupy residues 170–218, 342–379, 407–508, and 633–994; these read ISGL…AARY, IGRLEWEREALETAHEGHEERLAEAAEAAREAGAALGE, DSRT…REAQ, and LKQL…EGRE. Composition is skewed to basic and acidic residues over residues 421-438 and 465-480; these read RARETVEAAAEAQERAAE and DEARAEAQSREAEARA. Disordered stretches follow at residues 421-483, 806-826, and 862-889; these read RARE…AQRS, SAELAERKAETEEALREAAEA, and LRAAQEAEREAERQAGESREARARAEAR. Basic and acidic residues predominate over residues 866–889; it reads QEAEREAERQAGESREARARAEAR.

It belongs to the SMC family. As to quaternary structure, homodimer.

It localises to the cytoplasm. Its function is as follows. Required for chromosome condensation and partitioning. The polypeptide is Chromosome partition protein Smc (Cereibacter sphaeroides (strain ATCC 17029 / ATH 2.4.9) (Rhodobacter sphaeroides)).